The primary structure comprises 512 residues: Maturase K (512 aa).

Belongs to the intron maturase 2 family. MatK subfamily.

The protein localises to the plastid. The protein resides in the chloroplast. Usually encoded in the trnK tRNA gene intron. Probably assists in splicing its own and other chloroplast group II introns. The chain is Maturase K from Zantedeschia aethiopica (White calla lily).